A 320-amino-acid chain; its full sequence is Aspartate carbamoyltransferase catalytic subunit (320 aa).

Residues R68 and T69 each coordinate carbamoyl phosphate. Residue K96 coordinates L-aspartate. Residues R118, H148, and Q151 each contribute to the carbamoyl phosphate site. Residues R181 and R236 each coordinate L-aspartate. 2 residues coordinate carbamoyl phosphate: G277 and P278.

Belongs to the aspartate/ornithine carbamoyltransferase superfamily. ATCase family. As to quaternary structure, heterododecamer (2C3:3R2) of six catalytic PyrB chains organized as two trimers (C3), and six regulatory PyrI chains organized as three dimers (R2).

The catalysed reaction is carbamoyl phosphate + L-aspartate = N-carbamoyl-L-aspartate + phosphate + H(+). Its pathway is pyrimidine metabolism; UMP biosynthesis via de novo pathway; (S)-dihydroorotate from bicarbonate: step 2/3. In terms of biological role, catalyzes the condensation of carbamoyl phosphate and aspartate to form carbamoyl aspartate and inorganic phosphate, the committed step in the de novo pyrimidine nucleotide biosynthesis pathway. This chain is Aspartate carbamoyltransferase catalytic subunit, found in Paracidovorax citrulli (strain AAC00-1) (Acidovorax citrulli).